Here is an 81-residue protein sequence, read N- to C-terminus: Large ribosomal subunit protein bL27 (81 aa).

Residues 1–11 show a composition bias toward polar residues; sequence MATSKSGGSSK. The disordered stretch occupies residues 1 to 21; that stretch reads MATSKSGGSSKNGRDSISKRL.

It belongs to the bacterial ribosomal protein bL27 family.

This Borrelia hermsii (strain HS1 / DAH) protein is Large ribosomal subunit protein bL27.